A 404-amino-acid polypeptide reads, in one-letter code: Deoxyguanosinetriphosphate triphosphohydrolase-like protein (404 aa).

The segment at 1–33 is disordered; it reads MSVGMAAPRAAFSCDPDRSRGRQFAEPPSSNRS. Residues 69–217 form the HD domain; that stretch reads RLTHSLEVAQ…AALADDIAYD (149 aa).

Belongs to the dGTPase family. Type 2 subfamily.

This chain is Deoxyguanosinetriphosphate triphosphohydrolase-like protein, found in Rhodopseudomonas palustris (strain HaA2).